Reading from the N-terminus, the 172-residue chain is Large ribosomal subunit protein uL10 (172 aa).

It belongs to the universal ribosomal protein uL10 family. As to quaternary structure, part of the ribosomal stalk of the 50S ribosomal subunit. The N-terminus interacts with L11 and the large rRNA to form the base of the stalk. The C-terminus forms an elongated spine to which L12 dimers bind in a sequential fashion forming a multimeric L10(L12)X complex.

In terms of biological role, forms part of the ribosomal stalk, playing a central role in the interaction of the ribosome with GTP-bound translation factors. This chain is Large ribosomal subunit protein uL10, found in Idiomarina loihiensis (strain ATCC BAA-735 / DSM 15497 / L2-TR).